Consider the following 315-residue polypeptide: Glycine--tRNA ligase alpha subunit (315 aa).

It belongs to the class-II aminoacyl-tRNA synthetase family. Tetramer of two alpha and two beta subunits.

The protein resides in the cytoplasm. The enzyme catalyses tRNA(Gly) + glycine + ATP = glycyl-tRNA(Gly) + AMP + diphosphate. The chain is Glycine--tRNA ligase alpha subunit from Pseudomonas paraeruginosa (strain DSM 24068 / PA7) (Pseudomonas aeruginosa (strain PA7)).